Here is a 156-residue protein sequence, read N- to C-terminus: ATP synthase subunit b (156 aa).

A helical transmembrane segment spans residues 7-27 (LIGQTVAFIIFVWFCMKFVWP).

Belongs to the ATPase B chain family. As to quaternary structure, F-type ATPases have 2 components, F(1) - the catalytic core - and F(0) - the membrane proton channel. F(1) has five subunits: alpha(3), beta(3), gamma(1), delta(1), epsilon(1). F(0) has three main subunits: a(1), b(2) and c(10-14). The alpha and beta chains form an alternating ring which encloses part of the gamma chain. F(1) is attached to F(0) by a central stalk formed by the gamma and epsilon chains, while a peripheral stalk is formed by the delta and b chains.

It localises to the cell inner membrane. Functionally, f(1)F(0) ATP synthase produces ATP from ADP in the presence of a proton or sodium gradient. F-type ATPases consist of two structural domains, F(1) containing the extramembraneous catalytic core and F(0) containing the membrane proton channel, linked together by a central stalk and a peripheral stalk. During catalysis, ATP synthesis in the catalytic domain of F(1) is coupled via a rotary mechanism of the central stalk subunits to proton translocation. Its function is as follows. Component of the F(0) channel, it forms part of the peripheral stalk, linking F(1) to F(0). The protein is ATP synthase subunit b of Shewanella sp. (strain MR-4).